The sequence spans 593 residues: Maternal uncoordinated protein 2 (593 aa).

Belongs to the SCC4/mau-2 family. As to quaternary structure, may heterodimerize with scc-2/SCC2 to form the cohesin loading complex.

It is found in the nucleus. The protein resides in the nucleoplasm. The protein localises to the cytoplasm. In terms of biological role, plays an important role in the loading of the cohesin complex on to DNA. Forms a heterodimeric complex (also known as cohesin loading complex) with scc-2/SCC2 which mediates the loading of the cohesin complex onto chromatin. Required for normal development until the fourth larval stage. Functions cell autonomously to guide migrations during the development of the nervous system. Participates in the guidance of mechanosensory neuron AVM by a slt-1-independent mechanism. Regulates chromosome segregation in early embryos. This Caenorhabditis elegans protein is Maternal uncoordinated protein 2.